The primary structure comprises 72 residues: MTKKAKNVEKVPFEDAMKRLEEIIDLMNQPTTALEASLALYEEADQLMRICESRIQEVEARIKQLSDQRSES.

It belongs to the XseB family. Heterooligomer composed of large and small subunits.

The protein resides in the cytoplasm. It catalyses the reaction Exonucleolytic cleavage in either 5'- to 3'- or 3'- to 5'-direction to yield nucleoside 5'-phosphates.. Functionally, bidirectionally degrades single-stranded DNA into large acid-insoluble oligonucleotides, which are then degraded further into small acid-soluble oligonucleotides. The polypeptide is Exodeoxyribonuclease 7 small subunit (Chlamydia muridarum (strain MoPn / Nigg)).